Consider the following 117-residue polypeptide: Urease subunit beta (117 aa).

The tract at residues 95–117 is disordered; it reads NAVNGKLDGGPHPGVPATERGAK.

The protein belongs to the urease beta subunit family. Heterotrimer of UreA (gamma), UreB (beta) and UreC (alpha) subunits. Three heterotrimers associate to form the active enzyme.

It is found in the cytoplasm. The enzyme catalyses urea + 2 H2O + H(+) = hydrogencarbonate + 2 NH4(+). It participates in nitrogen metabolism; urea degradation; CO(2) and NH(3) from urea (urease route): step 1/1. The sequence is that of Urease subunit beta from Pseudarthrobacter chlorophenolicus (strain ATCC 700700 / DSM 12829 / CIP 107037 / JCM 12360 / KCTC 9906 / NCIMB 13794 / A6) (Arthrobacter chlorophenolicus).